The chain runs to 358 residues: Cyclin-dependent kinase 11 (358 aa).

The Protein kinase domain maps to 52-336 (FKKLYTINEG…ASDALKHPYF (285 aa)). ATP is bound by residues 58-66 (INEGAFGVV) and K81. The active-site Proton acceptor is D176.

Belongs to the protein kinase superfamily. CMGC Ser/Thr protein kinase family. CDC2/CDKX subfamily.

It catalyses the reaction L-seryl-[protein] + ATP = O-phospho-L-seryl-[protein] + ADP + H(+). It carries out the reaction L-threonyl-[protein] + ATP = O-phospho-L-threonyl-[protein] + ADP + H(+). The polypeptide is Cyclin-dependent kinase 11 (cdk11) (Dictyostelium discoideum (Social amoeba)).